The primary structure comprises 144 residues: 3-dehydroquinate dehydratase (144 aa).

Tyr24 functions as the Proton acceptor in the catalytic mechanism. Residues Asn76, His82, and Asp89 each contribute to the substrate site. His102 (proton donor) is an active-site residue. Substrate is bound by residues 103-104 (LS) and Arg113.

Belongs to the type-II 3-dehydroquinase family. In terms of assembly, homododecamer.

The catalysed reaction is 3-dehydroquinate = 3-dehydroshikimate + H2O. It participates in metabolic intermediate biosynthesis; chorismate biosynthesis; chorismate from D-erythrose 4-phosphate and phosphoenolpyruvate: step 3/7. In terms of biological role, catalyzes a trans-dehydration via an enolate intermediate. In Bordetella petrii (strain ATCC BAA-461 / DSM 12804 / CCUG 43448), this protein is 3-dehydroquinate dehydratase.